A 298-amino-acid polypeptide reads, in one-letter code: Acetylglutamate kinase (298 aa).

Substrate-binding positions include 64–65, Arg86, and Asn195; that span reads GG.

Belongs to the acetylglutamate kinase family. ArgB subfamily.

The protein resides in the cytoplasm. It carries out the reaction N-acetyl-L-glutamate + ATP = N-acetyl-L-glutamyl 5-phosphate + ADP. The protein operates within amino-acid biosynthesis; L-arginine biosynthesis; N(2)-acetyl-L-ornithine from L-glutamate: step 2/4. Catalyzes the ATP-dependent phosphorylation of N-acetyl-L-glutamate. This chain is Acetylglutamate kinase, found in Aquifex aeolicus (strain VF5).